The primary structure comprises 187 residues: GTP cyclohydrolase 1 (187 aa).

Zn(2+) contacts are provided by Cys-78, His-81, and Cys-150.

The protein belongs to the GTP cyclohydrolase I family. Homomer.

The catalysed reaction is GTP + H2O = 7,8-dihydroneopterin 3'-triphosphate + formate + H(+). Its pathway is cofactor biosynthesis; 7,8-dihydroneopterin triphosphate biosynthesis; 7,8-dihydroneopterin triphosphate from GTP: step 1/1. The protein is GTP cyclohydrolase 1 of Brevibacillus brevis (strain 47 / JCM 6285 / NBRC 100599).